Here is a 740-residue protein sequence, read N- to C-terminus: 1,4-alpha-glucan branching enzyme GlgB (740 aa).

The active-site Nucleophile is D409. The Proton donor role is filled by E462.

This sequence belongs to the glycosyl hydrolase 13 family. GlgB subfamily. As to quaternary structure, monomer.

It carries out the reaction Transfers a segment of a (1-&gt;4)-alpha-D-glucan chain to a primary hydroxy group in a similar glucan chain.. The protein operates within glycan biosynthesis; glycogen biosynthesis. Catalyzes the formation of the alpha-1,6-glucosidic linkages in glycogen by scission of a 1,4-alpha-linked oligosaccharide from growing alpha-1,4-glucan chains and the subsequent attachment of the oligosaccharide to the alpha-1,6 position. The polypeptide is 1,4-alpha-glucan branching enzyme GlgB (Methylococcus capsulatus (strain ATCC 33009 / NCIMB 11132 / Bath)).